The sequence spans 598 residues: Trichothecene efflux pump TRI12 (598 aa).

The helical transmembrane segment at 42 to 62 threads the bilayer; the sequence is IVASFAAFSMNVVATYFVLQA. A glycan (N-linked (GlcNAc...) asparagine) is linked at N79. The next 2 membrane-spanning stretches (helical) occupy residues 109–129 and 135–155; these read PFVI…CTAT and LAAM…PLFI. N161 is a glycosylation site (N-linked (GlcNAc...) asparagine). Transmembrane regions (helical) follow at residues 165–185, 197–217, 241–261, 273–293, 312–332, 356–376, 381–401, 409–429, 442–462, and 533–553; these read FLGL…SPYL, WIFY…IIWY, WIGI…VSWG, VIGL…YEVY, FVCI…LVIM, ATAS…FHLV, WQIL…SSIN, IALS…TMLL, AFAV…AAFI, and ANVY…SLCM. Positions 579-598 are disordered; sequence LEGNSESQPSPIILSMADKE.

The protein belongs to the major facilitator superfamily.

It is found in the cell membrane. Efflux pump that provides the dual role of trichothecene export and self-protection by allowing the fungus to evade the harmful effect of its own trichothecene production. The polypeptide is Trichothecene efflux pump TRI12 (Fusarium sporotrichioides).